A 337-amino-acid chain; its full sequence is Large ribosomal subunit protein uL3 (337 aa).

It belongs to the universal ribosomal protein uL3 family. As to quaternary structure, part of the 50S ribosomal subunit. Forms a cluster with proteins L14 and L24e.

In terms of biological role, one of the primary rRNA binding proteins, it binds directly near the 3'-end of the 23S rRNA, where it nucleates assembly of the 50S subunit. In Methanospirillum hungatei JF-1 (strain ATCC 27890 / DSM 864 / NBRC 100397 / JF-1), this protein is Large ribosomal subunit protein uL3.